The chain runs to 259 residues: Phosphatidylglycerol--prolipoprotein diacylglyceryl transferase (259 aa).

The next 4 membrane-spanning stretches (helical) occupy residues 10–30, 50–70, 86–106, and 112–132; these read IGLLEIRWYSLAYIIGILFAY, IISWWVTGMILGGRIGYILFY, WKGGMSFHGASLGLFCTMYIF, and IKFLSAIDLCLCAVPVGIFLG. Arginine 133 is an a 1,2-diacyl-sn-glycero-3-phospho-(1'-sn-glycerol) binding site. Transmembrane regions (helical) follow at residues 169-189, 197-217, and 227-247; these read LYEAFFEGLLLFVVMNLLFFF, GMLFSIFMIWYGIVRFFIEFV, and ILFNWITMGQLLSFIMVILGI.

The protein belongs to the Lgt family.

Its subcellular location is the cell inner membrane. The enzyme catalyses L-cysteinyl-[prolipoprotein] + a 1,2-diacyl-sn-glycero-3-phospho-(1'-sn-glycerol) = an S-1,2-diacyl-sn-glyceryl-L-cysteinyl-[prolipoprotein] + sn-glycerol 1-phosphate + H(+). The protein operates within protein modification; lipoprotein biosynthesis (diacylglyceryl transfer). In terms of biological role, catalyzes the transfer of the diacylglyceryl group from phosphatidylglycerol to the sulfhydryl group of the N-terminal cysteine of a prolipoprotein, the first step in the formation of mature lipoproteins. The polypeptide is Phosphatidylglycerol--prolipoprotein diacylglyceryl transferase (Ehrlichia ruminantium (strain Welgevonden)).